Here is a 354-residue protein sequence, read N- to C-terminus: Guanine nucleotide-binding protein G(i) subunit alpha-1 (354 aa).

Gly-2 carries N-myristoyl glycine lipidation. Cys-3 carries S-palmitoyl cysteine lipidation. The G-alpha domain maps to 32–354 (REVKLLLLGA…KNNLKDCGLF (323 aa)). The interval 35–48 (KLLLLGAGESGKST) is G1 motif. Residues 43–48 (ESGKST), 150–151 (DS), and 175–178 (LRTR) each bind GTP. Ser-47 lines the Mg(2+) pocket. A G2 motif region spans residues 173–181 (DVLRTRVKT). Thr-181 is a binding site for Mg(2+). The tract at residues 196–205 (FKMFDVGGQR) is G3 motif. GTP-binding positions include 200–204 (DVGGQ), 269–272 (NKKD), and Ala-326. Residues 265-272 (ILFLNKKD) are G4 motif. The segment at 324–329 (TCATDT) is G5 motif.

It belongs to the G-alpha family. G(i/o/t/z) subfamily. Heterotrimeric G proteins are composed of 3 units; alpha, beta and gamma. The alpha chain contains the guanine nucleotide binding site. Part of a spindle orientation complex at least composed of GNAI1, GPSM2 and NUMA1. Identified in complex with the beta subunit GNB1 and the gamma subunit GNG1. Identified in complex with the beta subunit GNB1 and the gamma subunit GNG2. Component of the TAS2R14-GNAI1 complex, consisting of TAS2R14, GNAI1, GNB1 and GNG2; within the complex interacts with TAS2R14; this complex plays a role in the perception of bitterness. GTP binding causes dissociation of the heterotrimer, liberating the individual subunits so that they can interact with downstream effector proteins. Interacts (GDP-bound form) with GPSM1; this inhibits guanine nucleotide exchange and GTP binding. Interacts (GDP-bound form) with GPSM2 (via GoLoco domains); this inhibits guanine nucleotide exchange. Interacts with RGS10; this strongly enhances GTP hydrolysis. Interacts with RGS1 and RGS16; this strongly enhances GTPase activity. Interacts with RGS4. Interacts with RGS12. Interacts (via active GTP- or inactive GDP-bound forms) with RGS14 (via RGS and GoLoco domains). Interacts with RGS3, RGS6, RGS7, RGS8, RGS17, RGS18 and RGS20 (in vitro). Interacts (GDP-bound form) with RIC8A (via C-terminus); promoting GNAI1 folding and association with the plasma membrane. Interacts (inactive GDP-bound form) with NUCB1 (via GBA motif); the interaction leads to activation of GNAI1. Interacts (inactive GDP-bound form) with CCDC88C/DAPLE (via GBA motif); the interaction leads to activation of GNAI1. Interacts (inactive GDP-bound form) with CCDC8A/GIV (via GBA motif). Myristoylation at Gly-2 is required for membrane anchoring before palmitoylation. In terms of processing, palmitoylation at Cys-3 varies with membrane lipid composition.

It localises to the nucleus. It is found in the cytoplasm. Its subcellular location is the cell membrane. The protein localises to the cytoskeleton. The protein resides in the microtubule organizing center. It localises to the centrosome. It is found in the cell cortex. Its subcellular location is the membrane. It carries out the reaction GTP + H2O = GDP + phosphate + H(+). Guanine nucleotide-binding proteins (G proteins) function as transducers downstream of G protein-coupled receptors (GPCRs) in numerous signaling cascades. The alpha chain contains the guanine nucleotide binding site and alternates between an active, GTP-bound state and an inactive, GDP-bound state. Signaling by an activated GPCR promotes GDP release and GTP binding. The alpha subunit has a low GTPase activity that converts bound GTP to GDP, thereby terminating the signal. Both GDP release and GTP hydrolysis are modulated by numerous regulatory proteins. Signaling is mediated via effector proteins, such as adenylate cyclase. Inhibits adenylate cyclase activity of ADCY1, ADCY5 and ADCY6, leading to decreased intracellular cAMP levels. The inactive GDP-bound form prevents the association of RGS14 with centrosomes and is required for the translocation of RGS14 from the cytoplasm to the plasma membrane. Required for normal cytokinesis during mitosis. Required for cortical dynein-dynactin complex recruitment during metaphase. This chain is Guanine nucleotide-binding protein G(i) subunit alpha-1 (GNAI1), found in Bos taurus (Bovine).